Here is a 57-residue protein sequence, read N- to C-terminus: UPF0434 protein Spea_1772 (57 aa).

Belongs to the UPF0434 family.

The chain is UPF0434 protein Spea_1772 from Shewanella pealeana (strain ATCC 700345 / ANG-SQ1).